A 516-amino-acid polypeptide reads, in one-letter code: DNA-(apurinic or apyrimidinic site) endonuclease 2 (516 aa).

Asn8 and Glu47 together coordinate Mg(2+). Tyr155 is an active-site residue. Residues Asp196, Asn198, Asp302, and His303 each contribute to the Mg(2+) site. The active-site Proton donor/acceptor is Asp196. Catalysis depends on His303, which acts as the Proton acceptor. Positions 357–366 (QPSHQIQAQR) are enriched in polar residues. A disordered region spans residues 357 to 389 (QPSHQIQAQRQPRKACMHSTRLRKSQGGPKRKQ). Residues 367–389 (QPRKACMHSTRLRKSQGGPKRKQ) show a composition bias toward basic residues. Lys370 is covalently cross-linked (Glycyl lysine isopeptide (Lys-Gly) (interchain with G-Cter in ubiquitin)). Residues 389–396 (QKNLMSYF) form a required for the interaction and colocalization with PCNA in nuclear foci in presence of oxidative-induced DNA damaging agents region. The Zn(2+) site is built by Cys467, His470, Cys493, and Cys507. The GRF-type zinc finger occupies 467–516 (CGGHREPCVMRTVKKTGPNFGRQFYMCARPRGPPSDPSSRCNFFLWSRPS).

This sequence belongs to the DNA repair enzymes AP/ExoA family. Interacts with PCNA. This interaction is increased by misincorporation of uracil in nuclear DNA. Requires Mg(2+) as cofactor. The cofactor is Mn(2+). Ubiquitinated by the CUL9-RBX1 complex. Ubiquitinated by MKRN3 at Lys-370 leading to proteasomal degradation. In terms of tissue distribution, expressed in lymphocytes, thymocytes and splenocytes (at protein level). Highly expressed in the thymus and weakly expressed in the bone marrow, spleen, eye, kidney, lung, brain and uterus.

It is found in the nucleus. Its subcellular location is the cytoplasm. It localises to the mitochondrion. It catalyses the reaction Exonucleolytic cleavage in the 3'- to 5'-direction to yield nucleoside 5'-phosphates.. With respect to regulation, 3'-5' exonuclease activity is activated by sodium and manganese. 3'-5' exonuclease and 3'-phosphodiesterase activities are stimulated in presence of PCNA. Its function is as follows. Functions as a weak apurinic/apyrimidinic (AP) endodeoxyribonuclease in the DNA base excision repair (BER) pathway of DNA lesions induced by oxidative and alkylating agents. Initiates repair of AP sites in DNA by catalyzing hydrolytic incision of the phosphodiester backbone immediately adjacent to the damage, generating a single-strand break with 5'-deoxyribose phosphate and 3'-hydroxyl ends. Also displays double-stranded DNA 3'-5' exonuclease, 3'-phosphodiesterase activities. Shows robust 3'-5' exonuclease activity on 3'-recessed heteroduplex DNA and is able to remove mismatched nucleotides preferentially. Shows fairly strong 3'-phosphodiesterase activity involved in the removal of 3'-damaged termini formed in DNA by oxidative agents. In the nucleus functions in the PCNA-dependent BER pathway. Plays a role in reversing blocked 3' DNA ends, problematic lesions that preclude DNA synthesis. Required for somatic hypermutation (SHM) and DNA cleavage step of class switch recombination (CSR) of immunoglobulin genes. Required for proper cell cycle progression during proliferation of peripheral lymphocytes. This is DNA-(apurinic or apyrimidinic site) endonuclease 2 (Apex2) from Mus musculus (Mouse).